A 41-amino-acid chain; its full sequence is ADDYDDEVLPDARGHRPIDRKREELPSLRPAPPPISGGGYR.

The interval 1–41 (ADDYDDEVLPDARGHRPIDRKREELPSLRPAPPPISGGGYR) is disordered. Y4 carries the sulfotyrosine modification. Positions 10–26 (PDARGHRPIDRKREELP) are enriched in basic and acidic residues. The segment at 14–16 (GHR) is beta-chain polymerization, binding distal domain of another fibrin.

In terms of assembly, heterohexamer; disulfide linked. Contains 2 sets of 3 non-identical chains (alpha, beta and gamma). The 2 heterotrimers are in head to head conformation with the N-termini in a small central domain. Conversion of fibrinogen to fibrin is triggered by thrombin, which cleaves fibrinopeptides A and B from alpha and beta chains, and thus exposes the N-terminal polymerization sites responsible for the formation of the soft clot.

It localises to the secreted. Its function is as follows. Cleaved by the protease thrombin to yield monomers which, together with fibrinogen alpha (FGA) and fibrinogen gamma (FGG), polymerize to form an insoluble fibrin matrix. Fibrin has a major function in hemostasis as one of the primary components of blood clots. In addition, functions during the early stages of wound repair to stabilize the lesion and guide cell migration during re-epithelialization. Was originally thought to be essential for platelet aggregation, based on in vitro studies using anticoagulated blood. However subsequent studies have shown that it is not absolutely required for thrombus formation in vivo. Enhances expression of SELP in activated platelets. Maternal fibrinogen is essential for successful pregnancy. Fibrin deposition is also associated with infection, where it protects against IFNG-mediated hemorrhage. May also facilitate the antibacterial immune response via both innate and T-cell mediated pathways. This Oryctolagus cuniculus (Rabbit) protein is Fibrinogen beta chain (FGB).